We begin with the raw amino-acid sequence, 454 residues long: Exopolyphosphatase PRUNE1 (454 aa).

Met1 is subject to N-acetylmethionine. 4 residues coordinate Mn(2+): Asp28, Asp30, Asp106, and Asp179. A DHH motif motif is present at residues 106–108 (DHH). The essential for homodimerization stretch occupies residues 394 to 421 (SLISGLSQDEEDPPLPPTPMNSLVDECP). The interval 397 to 420 (SGLSQDEEDPPLPPTPMNSLVDEC) is disordered. Position 400 is a phosphoserine (Ser400). Thr411 bears the Phosphothreonine mark. Ser415 is modified (phosphoserine).

This sequence belongs to the PPase class C family. Prune subfamily. As to quaternary structure, homooligomer. Able to homodimerize via its C-terminal domain. Interacts with NME1. Interacts with GSK3; at focal adhesion complexes where paxillin and vinculin are colocalized. Interacts with alpha and beta tubulin. Mn(2+) serves as cofactor.

It is found in the cytoplasm. It localises to the nucleus. The protein localises to the cell junction. Its subcellular location is the focal adhesion. The catalysed reaction is diphosphate + H2O = 2 phosphate + H(+). Its activity is regulated as follows. Activated by magnesium ions and inhibited by manganese ions. Inhibited by dipyridamole, moderately sensitive to IBMX and inhibited by vinpocetine. Phosphodiesterase (PDE) that has higher activity toward cAMP than cGMP, as substrate. Plays a role in cell proliferation, migration and differentiation, and acts as a negative regulator of NME1. Plays a role in the regulation of neurogenesis. Involved in the regulation of microtubule polymerization. The polypeptide is Exopolyphosphatase PRUNE1 (Prune1) (Mus musculus (Mouse)).